Reading from the N-terminus, the 602-residue chain is Aspartate--tRNA(Asp/Asn) ligase (602 aa).

Glutamate 170 is a binding site for L-aspartate. Residues 194-197 are aspartate; it reads QLFK. Arginine 216 is an L-aspartate binding site. Residues 216 to 218 and glutamine 225 each bind ATP; that span reads RDE. Histidine 448 contacts L-aspartate. Residue glutamate 482 coordinates ATP. Residue arginine 489 participates in L-aspartate binding. 534 to 537 lines the ATP pocket; that stretch reads GWDR. Positions 559 to 602 are disordered; that stretch reads GGVDPLTSAPAPITAQQRKESGVDAKPEPKGDAAAAKPQVSAEK. Basic and acidic residues predominate over residues 575–589; it reads QRKESGVDAKPEPKG.

It belongs to the class-II aminoacyl-tRNA synthetase family. Type 1 subfamily. As to quaternary structure, homodimer.

It is found in the cytoplasm. The enzyme catalyses tRNA(Asx) + L-aspartate + ATP = L-aspartyl-tRNA(Asx) + AMP + diphosphate. Its function is as follows. Aspartyl-tRNA synthetase with relaxed tRNA specificity since it is able to aspartylate not only its cognate tRNA(Asp) but also tRNA(Asn). Reaction proceeds in two steps: L-aspartate is first activated by ATP to form Asp-AMP and then transferred to the acceptor end of tRNA(Asp/Asn). In Rhodococcus opacus (strain B4), this protein is Aspartate--tRNA(Asp/Asn) ligase.